The following is a 157-amino-acid chain: Ribosomal RNA large subunit methyltransferase H (157 aa).

Residues leucine 74, glycine 106, and 125 to 130 (LGNITF) each bind S-adenosyl-L-methionine.

It belongs to the RNA methyltransferase RlmH family. Homodimer.

It localises to the cytoplasm. It catalyses the reaction pseudouridine(1915) in 23S rRNA + S-adenosyl-L-methionine = N(3)-methylpseudouridine(1915) in 23S rRNA + S-adenosyl-L-homocysteine + H(+). Its function is as follows. Specifically methylates the pseudouridine at position 1915 (m3Psi1915) in 23S rRNA. The polypeptide is Ribosomal RNA large subunit methyltransferase H (Lawsonia intracellularis (strain PHE/MN1-00)).